The primary structure comprises 199 residues: dITP/XTP pyrophosphatase (199 aa).

7 to 12 contributes to the substrate binding site; the sequence is TGNKGK. Residue Asp-71 is the Proton acceptor of the active site. Asp-71 serves as a coordination point for Mg(2+). Substrate-binding positions include Ala-72, 154–157, Lys-177, and 182–183; these read FGYD and HR.

Belongs to the HAM1 NTPase family. As to quaternary structure, homodimer. Mg(2+) is required as a cofactor.

It catalyses the reaction XTP + H2O = XMP + diphosphate + H(+). The catalysed reaction is dITP + H2O = dIMP + diphosphate + H(+). It carries out the reaction ITP + H2O = IMP + diphosphate + H(+). In terms of biological role, pyrophosphatase that catalyzes the hydrolysis of nucleoside triphosphates to their monophosphate derivatives, with a high preference for the non-canonical purine nucleotides XTP (xanthosine triphosphate), dITP (deoxyinosine triphosphate) and ITP. Seems to function as a house-cleaning enzyme that removes non-canonical purine nucleotides from the nucleotide pool, thus preventing their incorporation into DNA/RNA and avoiding chromosomal lesions. The protein is dITP/XTP pyrophosphatase of Bdellovibrio bacteriovorus (strain ATCC 15356 / DSM 50701 / NCIMB 9529 / HD100).